The following is a 361-amino-acid chain: Myb/SANT-like DNA-binding domain-containing protein 7 (361 aa).

A Myb-like domain is found at 11–70 (RWSRQETRTLLSILGEAEYIQRLQTVHHNADVYQAVSKRMQQEGFRRTERQCRSKFKVLK). Disordered stretches follow at residues 174–198 (TSDL…SYSS) and 217–272 (RLGV…ARRR). 2 stretches are compositionally biased toward polar residues: residues 187–198 (AGCSQGTPSYSS) and 226–249 (PCTS…SSSR).

The chain is Myb/SANT-like DNA-binding domain-containing protein 7 from Homo sapiens (Human).